Reading from the N-terminus, the 2343-residue chain is Pecanex-like protein 1 (2343 aa).

2 consecutive transmembrane segments (helical) span residues 33–53 (ALHLYLWLFLLGLPFTLYMAL) and 57–77 (MIIVAVYCPVVAAVFIVLKMV). Disordered stretches follow at residues 98–163 (FTDQ…GSSR), 271–290 (SHSYRKEHRPRGVPRTSSSA), 306–691 (QQQR…TRAR), and 749–826 (TRSR…QGQQ). The segment covering 143 to 163 (SSRNSYAGLDPSNQIGSGSSR) has biased composition (polar residues). The segment covering 272–282 (HSYRKEHRPRG) has biased composition (basic residues). Residues 372–390 (SLRSLSTRSSGSTESYCSG) show a composition bias toward low complexity. Residues 396-412 (NSTLSSYKSEQTSSTHI) are compositionally biased toward polar residues. Basic and acidic residues-rich tracts occupy residues 416–457 (LSEH…DKTA), 507–521 (RPPEQSAESKEEQGE), and 530–546 (KVCKDDGGKQKEGDVRP). Over residues 556–571 (TSAHKPGRRRTGKKRA) the composition is skewed to basic residues. 3 stretches are compositionally biased toward low complexity: residues 624–637 (SDSSSSATSHSCQS), 769–780 (AATGAAQASEEA), and 809–826 (TLLIGPPLSLQDGQQGQQ). A run of 13 helical transmembrane segments spans residues 978–998 (FWILPQLWIGINFDRLTLLAL), 1009–1029 (ILAVVLAILVAFLGSILLIQG), 1034–1054 (IWVFQFCLVIASCQYSLLKSV), 1068–1088 (IIAYSRPVYFCLCCGLIWLLD), 1118–1138 (LVIVFTLCFPIVFFIGLLPQV), 1162–1182 (LLAALYSFLCSVVAVALLYGL), 1195–1215 (HIPVLFSVFCGLLVAVSYHLS), 1268–1288 (LVVCVVIGVLYFAIHVSTVFT), 1296–1316 (YVLYALVGFVGLVTHYVLPQV), 1406–1426 (SFSSPTYQYITVIFTVLFFKF), 1434–1454 (TMLLDLFFMSILFSKLWELLY), 1458–1478 (FVYTYVAPWQITWGSAFHAFA), and 1493–1513 (AVVSALFSTPLNPFLGSAIFI). Residues 2050 to 2120 (EDSDTGGGTS…VQSSLVRQSP (71 aa)) are disordered. 2 stretches are compositionally biased toward polar residues: residues 2060 to 2080 (CPANSATTASDPHNSVPQGST) and 2094 to 2117 (PTTSYPPTLGTSHSAHSVQSSLVR).

It belongs to the pecanex family. Specifically expressed in the germ line and not in the somatic cells of the testis, reaching its peak at the pachytene stage of the meiotic prophase. Detected in pachytene spermatocytes and round spermatids (at protein level).

Its subcellular location is the membrane. This is Pecanex-like protein 1 from Rattus norvegicus (Rat).